Here is a 310-residue protein sequence, read N- to C-terminus: CRAL-TRIO domain-containing protein YKL091C (310 aa).

The 174-residue stretch at 101–274 (ERIKLAKMYP…KYGGTSVLHN (174 aa)) folds into the CRAL-TRIO domain.

The polypeptide is CRAL-TRIO domain-containing protein YKL091C (Saccharomyces cerevisiae (strain ATCC 204508 / S288c) (Baker's yeast)).